The primary structure comprises 150 residues: Deoxyuridine 5'-triphosphate nucleotidohydrolase (150 aa).

Residues R65–G67, N78, and T82–D84 contribute to the substrate site. Residues L130–E150 are disordered.

Belongs to the dUTPase family. Requires Mg(2+) as cofactor.

The enzyme catalyses dUTP + H2O = dUMP + diphosphate + H(+). Its pathway is pyrimidine metabolism; dUMP biosynthesis; dUMP from dCTP (dUTP route): step 2/2. Functionally, this enzyme is involved in nucleotide metabolism: it produces dUMP, the immediate precursor of thymidine nucleotides and it decreases the intracellular concentration of dUTP so that uracil cannot be incorporated into DNA. The polypeptide is Deoxyuridine 5'-triphosphate nucleotidohydrolase (Chlorobaculum parvum (strain DSM 263 / NCIMB 8327) (Chlorobium vibrioforme subsp. thiosulfatophilum)).